A 318-amino-acid polypeptide reads, in one-letter code: tRNA dimethylallyltransferase (318 aa).

Residue 16 to 23 coordinates ATP; it reads GPTASGKS. 18 to 23 is a binding site for substrate; that stretch reads TASGKS. Interaction with substrate tRNA regions lie at residues 41-44 and 165-169; these read DSRQ and QRLIR.

It belongs to the IPP transferase family. As to quaternary structure, monomer. Mg(2+) is required as a cofactor.

It catalyses the reaction adenosine(37) in tRNA + dimethylallyl diphosphate = N(6)-dimethylallyladenosine(37) in tRNA + diphosphate. Functionally, catalyzes the transfer of a dimethylallyl group onto the adenine at position 37 in tRNAs that read codons beginning with uridine, leading to the formation of N6-(dimethylallyl)adenosine (i(6)A). This chain is tRNA dimethylallyltransferase, found in Pelodictyon phaeoclathratiforme (strain DSM 5477 / BU-1).